A 262-amino-acid polypeptide reads, in one-letter code: Acyl-[acyl-carrier-protein]--UDP-N-acetylglucosamine O-acyltransferase (262 aa).

It belongs to the transferase hexapeptide repeat family. LpxA subfamily. In terms of assembly, homotrimer.

Its subcellular location is the cytoplasm. It catalyses the reaction a (3R)-hydroxyacyl-[ACP] + UDP-N-acetyl-alpha-D-glucosamine = a UDP-3-O-[(3R)-3-hydroxyacyl]-N-acetyl-alpha-D-glucosamine + holo-[ACP]. The protein operates within glycolipid biosynthesis; lipid IV(A) biosynthesis; lipid IV(A) from (3R)-3-hydroxytetradecanoyl-[acyl-carrier-protein] and UDP-N-acetyl-alpha-D-glucosamine: step 1/6. In terms of biological role, involved in the biosynthesis of lipid A, a phosphorylated glycolipid that anchors the lipopolysaccharide to the outer membrane of the cell. The protein is Acyl-[acyl-carrier-protein]--UDP-N-acetylglucosamine O-acyltransferase of Blochmanniella floridana.